The primary structure comprises 324 residues: tRNA dimethylallyltransferase (324 aa).

An ATP-binding site is contributed by 17-24; sequence GPTASGKT. A substrate-binding site is contributed by 19 to 24; that stretch reads TASGKT. Interaction with substrate tRNA stretches follow at residues 42–45, 166–170, 251–256, and 284–291; these read DSAL, QRIQR, RCVGYR, and KRQITWLR.

Belongs to the IPP transferase family. Monomer. Mg(2+) is required as a cofactor.

The catalysed reaction is adenosine(37) in tRNA + dimethylallyl diphosphate = N(6)-dimethylallyladenosine(37) in tRNA + diphosphate. Its function is as follows. Catalyzes the transfer of a dimethylallyl group onto the adenine at position 37 in tRNAs that read codons beginning with uridine, leading to the formation of N6-(dimethylallyl)adenosine (i(6)A). The polypeptide is tRNA dimethylallyltransferase (Burkholderia ambifaria (strain MC40-6)).